The following is a 300-amino-acid chain: Serine/arginine-rich splicing factor SR34A (300 aa).

The region spanning 7 to 82 is the RRM 1 domain; it reads RSIYVGNLPG…CRLRVELAHG (76 aa). Disordered regions lie at residues 81–110 and 198–300; these read HGGR…GGGG and YESS…EGSV. Positions 94–110 are enriched in gly residues; it reads GYGGGGSGYGGGGGGGG. The RRM 2 domain occupies 122-200; sequence FRVIVRGLPS…GFIRVKKYES (79 aa). Residues 203 to 239 show a composition bias toward basic residues; that stretch reads SRSRSPSRSRSRSRSRSRSRGRGRSHSRSRSLSRSKS. Serine 207, serine 209, serine 231, serine 233, serine 239, serine 259, serine 275, and serine 285 each carry phosphoserine. Over residues 253–262 the composition is skewed to low complexity; it reads SRSISKSRSP. A compositionally biased stretch (basic residues) spans 275–287; sequence SRSKSRSRSRSRS.

Belongs to the splicing factor SR family. SR subfamily. Component of the spliceosome.

Its subcellular location is the nucleus speckle. It localises to the nucleus. The protein resides in the nucleoplasm. Probably involved in intron recognition and spliceosome assembly. This chain is Serine/arginine-rich splicing factor SR34A (SR34A), found in Arabidopsis thaliana (Mouse-ear cress).